The sequence spans 370 residues: Spermidine/putrescine import ATP-binding protein PotA (370 aa).

The ABC transporter domain maps to 11 to 241; it reads IELRSITKSY…PKNLFVAKFI (231 aa). 43-50 is a binding site for ATP; sequence GPSGCGKT.

Belongs to the ABC transporter superfamily. Spermidine/putrescine importer (TC 3.A.1.11.1) family. As to quaternary structure, the complex is composed of two ATP-binding proteins (PotA), two transmembrane proteins (PotB and PotC) and a solute-binding protein (PotD).

The protein resides in the cell inner membrane. The enzyme catalyses ATP + H2O + polyamine-[polyamine-binding protein]Side 1 = ADP + phosphate + polyamineSide 2 + [polyamine-binding protein]Side 1.. Its function is as follows. Part of the ABC transporter complex PotABCD involved in spermidine/putrescine import. Responsible for energy coupling to the transport system. This chain is Spermidine/putrescine import ATP-binding protein PotA, found in Pasteurella multocida (strain Pm70).